A 652-amino-acid chain; its full sequence is Coiled-coil domain-containing protein 81 (652 aa).

The residue at position 206 (Ser-206) is a Phosphoserine. The segment covering 238-256 has biased composition (basic and acidic residues); it reads KCKLKDQSDKEEGTRDISS. The disordered stretch occupies residues 238–258; that stretch reads KCKLKDQSDKEEGTRDISSPK. Phosphoserine occurs at positions 275, 296, and 417. The stretch at 436-493 forms a coiled coil; that stretch reads MDNRQENEIKQRQYRELMDRLEQVQLTEELAAQRAKFLKDKMEETQCYKRALDAQIKN.

Its subcellular location is the cytoplasm. It is found in the cytoskeleton. The protein localises to the microtubule organizing center. The protein resides in the centrosome. The sequence is that of Coiled-coil domain-containing protein 81 (CCDC81) from Homo sapiens (Human).